A 707-amino-acid chain; its full sequence is Polyribonucleotide nucleotidyltransferase (707 aa).

Mg(2+) is bound by residues Asp-488 and Asp-494. Residues 555 to 614 (PRLYVMKINPEKIRDVIGKGGAVIRALTEETGTQINIEEDGTITIASNDSAKADEAKRRI) enclose the KH domain. The 69-residue stretch at 624–692 (GKVYEGAITK…EKGRVKLSMK (69 aa)) folds into the S1 motif domain.

This sequence belongs to the polyribonucleotide nucleotidyltransferase family. The cofactor is Mg(2+).

It localises to the cytoplasm. The catalysed reaction is RNA(n+1) + phosphate = RNA(n) + a ribonucleoside 5'-diphosphate. Its function is as follows. Involved in mRNA degradation. Catalyzes the phosphorolysis of single-stranded polyribonucleotides processively in the 3'- to 5'-direction. This is Polyribonucleotide nucleotidyltransferase from Polaromonas sp. (strain JS666 / ATCC BAA-500).